We begin with the raw amino-acid sequence, 478 residues long: Cysteine--tRNA ligase (478 aa).

Cys29 is a binding site for Zn(2+). Residues 31–41 (VTVYDYCHLGH) carry the 'HIGH' region motif. The Zn(2+) site is built by Cys213, His238, and Glu242. Positions 270-274 (KMSKS) match the 'KMSKS' region motif. Position 273 (Lys273) interacts with ATP.

It belongs to the class-I aminoacyl-tRNA synthetase family. Monomer. Zn(2+) is required as a cofactor.

It localises to the cytoplasm. The enzyme catalyses tRNA(Cys) + L-cysteine + ATP = L-cysteinyl-tRNA(Cys) + AMP + diphosphate. This Synechococcus sp. (strain ATCC 27144 / PCC 6301 / SAUG 1402/1) (Anacystis nidulans) protein is Cysteine--tRNA ligase.